A 76-amino-acid polypeptide reads, in one-letter code: Antimicrobial peptide Smp24 (76 aa).

Residues 1–22 (MQYKTFLVIFMAYLLVTHEAEA) form the signal peptide. Residues 47–76 (SKRKRDVEDFFDPYQRDLDLELERLLSQLQ) constitute a propeptide that is removed on maturation.

Belongs to the non-disulfide-bridged peptide (NDBP) superfamily. Medium-length antimicrobial peptide (group 3) family. As to expression, expressed by the venom gland.

It is found in the secreted. The protein localises to the target cell membrane. In terms of biological role, peptide that shows antimicrobial activity, moderate cytolysis on eukaryote cells and interference with DNA synthesis. Has potent activity against Gram-positive bacteria and moderate activity against Gram-negative bacteria, as well as moderate activity against fungi. Acts by inducing bacterial membrane disruption. Uses multiple modes of action depending on the membrane lipid composition. Uses a toroidal pore mechanism against the prokaryotic like membrane and forms hexagonal phase non-lamellar structures in eukaryotic-like membrane. Shows activity against B.subtilis (MIC=4 ug/ml), S.epidermidis (MIC=8 ug/ml), S.aureus (MIC=8 ug/ml), E.coli (MIC=64 ug/ml), K.pneumoniae (MIC=128 ug/ml), P.aeruginosa (MIC=256 ug/ml), and C.albicans (MIC=32 ug/ml). Shows moderate hemolysis activity. The protein is Antimicrobial peptide Smp24 of Scorpio palmatus (Israeli golden scorpion).